We begin with the raw amino-acid sequence, 249 residues long: Geranylgeranylglyceryl phosphate synthase (249 aa).

Positions 20 and 49 each coordinate Mg(2+). Sn-glycerol 1-phosphate-binding positions include 169–175 (YLDAGSG), 200–201 (GG), and 222–223 (GN).

It belongs to the GGGP/HepGP synthase family. Group II subfamily. In terms of assembly, homohexamer. Requires Mg(2+) as cofactor.

The enzyme catalyses sn-glycerol 1-phosphate + (2E,6E,10E)-geranylgeranyl diphosphate = sn-3-O-(geranylgeranyl)glycerol 1-phosphate + diphosphate. In terms of biological role, prenyltransferase that catalyzes the transfer of the geranylgeranyl moiety of geranylgeranyl diphosphate (GGPP) to the C3 hydroxyl of sn-glycerol-1-phosphate (G1P). In Spirosoma linguale (strain ATCC 33905 / DSM 74 / LMG 10896 / Claus 1), this protein is Geranylgeranylglyceryl phosphate synthase.